The following is a 115-amino-acid chain: Hydrogenase maturation factor HypA (115 aa).

Position 2 (His2) interacts with Ni(2+). Residues Cys73, Cys76, Cys89, and Cys92 each contribute to the Zn(2+) site.

It belongs to the HypA/HybF family.

In terms of biological role, involved in the maturation of [NiFe] hydrogenases. Required for nickel insertion into the metal center of the hydrogenase. The chain is Hydrogenase maturation factor HypA from Nitrosospira multiformis (strain ATCC 25196 / NCIMB 11849 / C 71).